The chain runs to 514 residues: Leucine-rich repeat-containing protein 14B (514 aa).

The stretch at 104–141 (RRRLRVADLTGIRDVQVQRCPCGRALGRWGRTQLLART) is one LRR 1; degenerate repeat. The LRR 2; degenerate repeat unit spans residues 185–209 (RVHCPSFRADSLSPSQLLHVLRLAG). The stretch at 238–277 (FPRLASLTLPTKAFDAPPTYASTPDGEDPLLASIARELSK) is one LRR 4; degenerate repeat. LRR repeat units lie at residues 278 to 302 (MAQL…LGPL), 303 to 334 (QTPL…AHLE), 335 to 350 (VLDL…YPST), 359 to 386 (SRTL…GLSP), and 387 to 411 (CHRL…LFTA).

Belongs to the PRAME family. LRRC14 subfamily.

The protein is Leucine-rich repeat-containing protein 14B of Homo sapiens (Human).